The primary structure comprises 78 residues: Pigment-dispersing hormone 2 peptides (78 aa).

The first 21 residues, 1–21 (MRSGVFVAVLVVVVFALLTQG), serve as a signal peptide directing secretion. Ala75 carries the post-translational modification Alanine amide.

Belongs to the arthropod PDH family. Eyestalk sinus gland.

It is found in the secreted. Functionally, the pigment-dispersing hormone causes the migration of the distal retinal pigment into the proximal end of the pigment chromatophore cells and thus decreases the amount of light entering the retinulas. May also function as a neurotransmitter and/or neuromodulator. The polypeptide is Pigment-dispersing hormone 2 peptides (PDH2) (Callinectes sapidus (Blue crab)).